A 227-amino-acid chain; its full sequence is Guanylate kinase (227 aa).

Positions 21-199 constitute a Guanylate kinase-like domain; sequence GNLFMVVAPS…ALAELECIVA (179 aa). 28 to 35 provides a ligand contact to ATP; it reads APSGAGKS.

Belongs to the guanylate kinase family.

It is found in the cytoplasm. The catalysed reaction is GMP + ATP = GDP + ADP. Functionally, essential for recycling GMP and indirectly, cGMP. In Burkholderia thailandensis (strain ATCC 700388 / DSM 13276 / CCUG 48851 / CIP 106301 / E264), this protein is Guanylate kinase.